We begin with the raw amino-acid sequence, 421 residues long: MKDRVIQVDERLPFLQSIPLSLQHLFAMFGSTVLVPMLLQINPAICLLMNGIGTLIYIFLCKGRIPAYLGSSFAFISPVLIVISTRSYEAALSGFLVVGLVFCLIGLLVKAVGTGWIEIVFPPAAMGAIVAVIGLELAPTAANMAGFVASAGTEGWSPDPKVIAVSLVTLLTAVVGNVMFRGFMKIIPILISIIVGYALAAFLGIVDFSIVREAKWFDLPTFYIMKWDWSSIAIIVPAALVVVAEHIGHLIVTSNIVGKDLSKDPGLDRSLLGNGVSTVISSFVGSTPNTTYGENIGVLALTRVYSIWIIGGAAVMAIVLSFVGKLAALIQTIPVPVMGGVSILLFGVIAGSGVRMLVEAKVDYSNPKNLILTAVVLIIGISGAAFKWGNFEMKGMALATVIAILLGLFFNIIDKLKWSNE.

The next 12 membrane-spanning stretches (helical) occupy residues 18 to 38 (IPLSLQHLFAMFGSTVLVPML), 41 to 61 (INPAICLLMNGIGTLIYIFLC), 65 to 85 (IPAYLGSSFAFISPVLIVIST), 89 to 109 (EAALSGFLVVGLVFCLIGLLV), 115 to 135 (GWIEIVFPPAAMGAIVAVIGL), 160 to 180 (PKVIAVSLVTLLTAVVGNVMF), 186 to 206 (IIPILISIIVGYALAAFLGIV), 232 to 252 (IAIIVPAALVVVAEHIGHLIV), 304 to 324 (VYSIWIIGGAAVMAIVLSFVG), 329 to 349 (LIQTIPVPVMGGVSILLFGVI), 371 to 391 (ILTAVVLIIGISGAAFKWGNF), and 393 to 413 (MKGMALATVIAILLGLFFNII).

This sequence belongs to the nucleobase:cation symporter-2 (NCS2) (TC 2.A.40) family.

It is found in the cell membrane. Inhibited by the proton gradient disruptor carbonyl cyanide m-chlorophenylhydrazone (CCCP), but not by the sodium gradient disruptor ouabain. Both xanthine and uric acid act as competitive inhibitors of uracil transport. Its function is as follows. Specific for the uptake of uracil. Transport is probably proton-dependent. This chain is Uracil permease, found in Paenibacillus larvae subsp. larvae (strain NRRL B-3650 / LMG 16245).